Here is a 977-residue protein sequence, read N- to C-terminus: Alanine--tRNA ligase (977 aa).

The segment at 512-535 (SQVDSKLQSSTPAGTGSYDSKQVS) is disordered. Positions 618, 622, 720, and 724 each coordinate Zn(2+).

This sequence belongs to the class-II aminoacyl-tRNA synthetase family. Requires Zn(2+) as cofactor.

The protein resides in the cytoplasm. The enzyme catalyses tRNA(Ala) + L-alanine + ATP = L-alanyl-tRNA(Ala) + AMP + diphosphate. Its function is as follows. Catalyzes the attachment of alanine to tRNA(Ala) in a two-step reaction: alanine is first activated by ATP to form Ala-AMP and then transferred to the acceptor end of tRNA(Ala). Also edits incorrectly charged Ser-tRNA(Ala) and Gly-tRNA(Ala) via its editing domain. This is Alanine--tRNA ligase from Leptospira interrogans serogroup Icterohaemorrhagiae serovar Lai (strain 56601).